The following is a 234-amino-acid chain: Carboxymethylenebutenolidase 1 (234 aa).

Residues Cys-123, Asp-171, and His-201 contribute to the active site.

Belongs to the dienelactone hydrolase family. In terms of assembly, monomer.

The enzyme catalyses 2-(5-oxo-2,5-dihydrofuran-2-ylidene)acetate + H2O = 4-oxohex-2-enedioate + H(+). Its pathway is aromatic compound metabolism; 3-chlorocatechol degradation. Functionally, ring cleavage of cyclic ester dienelactone to produce maleylacetate. This is Carboxymethylenebutenolidase 1 (tfdEI) from Cupriavidus pinatubonensis (strain JMP 134 / LMG 1197) (Cupriavidus necator (strain JMP 134)).